The chain runs to 260 residues: Putative protein phosphatase 2C-like protein 44 (260 aa).

The region spanning 41–259 (YYTVDRLSYA…SSISCVVIRF (219 aa)) is the PPM-type phosphatase domain.

This sequence belongs to the PP2C family.

This is Putative protein phosphatase 2C-like protein 44 from Arabidopsis thaliana (Mouse-ear cress).